Reading from the N-terminus, the 192-residue chain is UPF0312 protein PFLU_5725 (192 aa).

Positions 1 to 23 are cleaved as a signal peptide; it reads MLKKTLAALAIGTALLSAGQVMA.

The protein belongs to the UPF0312 family. Type 1 subfamily.

It localises to the periplasm. The polypeptide is UPF0312 protein PFLU_5725 (Pseudomonas fluorescens (strain SBW25)).